The sequence spans 169 residues: NSSYRIISIGRGALGGDVYLGKSPNSDAPCPDGVFRYNSDVGPSGTPVRFIPLSGGIFEDQLLNIQFNIPTVKLCVSYTIWKVGNLNAYFRTMLLETGGTIGQADNSYFKIVKSSKIGYNLLSCPFTSIICLRCPEDQFCAKVGVVIQNGKRRLALVNENPLDVLFQEV.

Asn1 is a glycosylation site (N-linked (GlcNAc...) asparagine). Cystine bridges form between Cys30/Cys75 and Cys124/Cys134.

Belongs to the protease inhibitor I3 (leguminous Kunitz-type inhibitor) family.

It localises to the vacuole. Functionally, inhibitor of cathepsin D (aspartic protease). May also inhibit trypsin and chymotrypsin (serine proteases). Protects the plant by inhibiting proteases of invading organisms. This is Aspartic protease inhibitor 6 from Solanum tuberosum (Potato).